Consider the following 585-residue polypeptide: MNLFTDFEARIKTALEQIDLVREKRSELDFGRITVEPPRDASHGDVATNAAMVLAKPLGSNPRALADVIIAKLKEDADVADVSVAGPGFINIRLSVGYWQRLLASMINSGTDYGRSTLGAGRKVNVEYVSANPTGPMHVGHCRGAVVGDALANLLAFAGYGVEKEYYINDAGSQIDVLARSVFLRYREALGERIGEIPSGLYPGDYLVPVGQSLAADYGVRLHNMPEEQWMPIVKDRTISAMMVMIREDLAALNVHHDIFFSERTLHANGAAAIRTAINDLTFKGYVYKGTLPPPKGQLPEDWEDREQTLFRSTEVGDDMDRPLIKSDGSYTYFAADVAYFKNKFDRGFDEMIYVLGADHGGYVKRLEAVARGVSNGKAKLTVLLCQLVKLYRNGEPVKMSKRSGDFVTLRDVVEEVGRDSVRFMMLYRKNSEPLDFDFAKVTEQSKDNPVFYVQYAHARCMSVFRQAREAFPGLEVSAEDLAKAVAGIGDPAELQLVAKLAEFPRVVEAAAQSQEPHRIAFYLYDLASSFHAHWNKGKDQTELRFVNDKNRESSIARLGLVYAVASVLKSGLAITGTAAPDEMR.

A 'HIGH' region motif is present at residues 131–141 (ANPTGPMHVGH).

Belongs to the class-I aminoacyl-tRNA synthetase family. Monomer.

It is found in the cytoplasm. It catalyses the reaction tRNA(Arg) + L-arginine + ATP = L-arginyl-tRNA(Arg) + AMP + diphosphate. In Rhizobium etli (strain CIAT 652), this protein is Arginine--tRNA ligase.